The sequence spans 494 residues: Glycerol kinase (494 aa).

Position 13 (T13) interacts with ADP. ATP-binding residues include T13, T14, and S15. T13 contributes to the sn-glycerol 3-phosphate binding site. R17 provides a ligand contact to ADP. Sn-glycerol 3-phosphate is bound by residues R83, E84, Y135, and D244. Glycerol is bound by residues R83, E84, Y135, D244, and Q245. ADP contacts are provided by T266 and G309. ATP is bound by residues T266, G309, Q313, and G410. Positions 410 and 414 each coordinate ADP.

The protein belongs to the FGGY kinase family.

It carries out the reaction glycerol + ATP = sn-glycerol 3-phosphate + ADP + H(+). It participates in polyol metabolism; glycerol degradation via glycerol kinase pathway; sn-glycerol 3-phosphate from glycerol: step 1/1. With respect to regulation, inhibited by fructose 1,6-bisphosphate (FBP). Functionally, key enzyme in the regulation of glycerol uptake and metabolism. Catalyzes the phosphorylation of glycerol to yield sn-glycerol 3-phosphate. The protein is Glycerol kinase of Shewanella baltica (strain OS185).